The chain runs to 293 residues: Formamidopyrimidine-DNA glycosylase (293 aa).

The active-site Schiff-base intermediate with DNA is P2. E3 (proton donor) is an active-site residue. K60 serves as the catalytic Proton donor; for beta-elimination activity. Residues H110, R129, and K174 each coordinate DNA. An FPG-type zinc finger spans residues 259-293 (NVYRRTGKKCHACKNLIERQKISGRSTHWCRKCQK). The active-site Proton donor; for delta-elimination activity is R283.

This sequence belongs to the FPG family. In terms of assembly, monomer. The cofactor is Zn(2+).

It catalyses the reaction Hydrolysis of DNA containing ring-opened 7-methylguanine residues, releasing 2,6-diamino-4-hydroxy-5-(N-methyl)formamidopyrimidine.. It carries out the reaction 2'-deoxyribonucleotide-(2'-deoxyribose 5'-phosphate)-2'-deoxyribonucleotide-DNA = a 3'-end 2'-deoxyribonucleotide-(2,3-dehydro-2,3-deoxyribose 5'-phosphate)-DNA + a 5'-end 5'-phospho-2'-deoxyribonucleoside-DNA + H(+). In terms of biological role, involved in base excision repair of DNA damaged by oxidation or by mutagenic agents. Acts as a DNA glycosylase that recognizes and removes damaged bases. Has a preference for oxidized purines, such as 7,8-dihydro-8-oxoguanine (8-oxoG). Has AP (apurinic/apyrimidinic) lyase activity and introduces nicks in the DNA strand. Cleaves the DNA backbone by beta-delta elimination to generate a single-strand break at the site of the removed base with both 3'- and 5'-phosphates. This Prochlorococcus marinus (strain MIT 9515) protein is Formamidopyrimidine-DNA glycosylase.